Reading from the N-terminus, the 481-residue chain is MHMDYHSPYFFGYLLGLIHLLGVVAALHALFTVRTAQGAIAWAMPLFFIPYLTLIPYLIFGARSFYAYIKARRQANQEMHVAMANLNWRPWVEEALTARESESYAALRAMPKLGRMPCLANNQVKLLVNGKATFDAIFAAIEKARDVVLVQFFIIHDDTLGKALQQLLLRKAAEGVQVFVLYDRVGSHALPASYSQQLRNGGVQIHAFATRRGWFNRFQVNFRNHRKIVVVDGLLGFIGGHNVGDEYLGGHPQLSPWRDTHVQISGPVLACLQESFAEDWYWATRQLPPLILPDAYPDNGVLCQALASGPADPQETCSLFFLEAIHSATRRVWITSPYFIPDEAVFAALRLAVLRGVDVRVLIPSRPDHRIVYAASSLFAFEAVRAGVRMFRYQPGFLHQKVVLVDDEVSAIGSANLDNRSFRLNFEITLLTVDRNFADQVEHMLIKDFEQAREITAEDSRDTHRLQQLGMRIARLISPIL.

The next 2 helical transmembrane spans lie at 10-30 (FFGY…LHAL) and 40-60 (IAWA…YLIF). PLD phosphodiesterase domains are found at residues 220–247 (VNFR…GDEY) and 394–421 (QPGF…DNRS). Catalysis depends on residues histidine 225, lysine 227, aspartate 232, histidine 399, lysine 401, and aspartate 406.

Belongs to the phospholipase D family. Cardiolipin synthase subfamily. ClsA sub-subfamily.

It is found in the cell inner membrane. The enzyme catalyses 2 a 1,2-diacyl-sn-glycero-3-phospho-(1'-sn-glycerol) = a cardiolipin + glycerol. Functionally, catalyzes the reversible phosphatidyl group transfer from one phosphatidylglycerol molecule to another to form cardiolipin (CL) (diphosphatidylglycerol) and glycerol. The protein is Cardiolipin synthase A of Pseudomonas putida (Arthrobacter siderocapsulatus).